A 136-amino-acid chain; its full sequence is Large ribosomal subunit protein bL20c (136 aa).

This sequence belongs to the bacterial ribosomal protein bL20 family.

It localises to the plastid. It is found in the chloroplast. In terms of biological role, binds directly to 23S ribosomal RNA and is necessary for the in vitro assembly process of the 50S ribosomal subunit. It is not involved in the protein synthesizing functions of that subunit. The polypeptide is Large ribosomal subunit protein bL20c (Huperzia lucidula (Shining clubmoss)).